We begin with the raw amino-acid sequence, 122 residues long: Large ribosomal subunit protein uL14 (122 aa).

The protein belongs to the universal ribosomal protein uL14 family. As to quaternary structure, part of the 50S ribosomal subunit. Forms a cluster with proteins L3 and L19. In the 70S ribosome, L14 and L19 interact and together make contacts with the 16S rRNA in bridges B5 and B8.

In terms of biological role, binds to 23S rRNA. Forms part of two intersubunit bridges in the 70S ribosome. This chain is Large ribosomal subunit protein uL14, found in Geobacter sulfurreducens (strain ATCC 51573 / DSM 12127 / PCA).